The chain runs to 432 residues: MNPVVDILSLDHEGHGVARLDGKVTFVDGALAGERAEIAIFRKHAKYNSANAVAILAPSAQRAEPRCRYFGRCGGCSMQHLEPSAQVAAKQRVLEENLARIGKVRPSVLLPALHGPSWGYRGRARLSVRRVEKKGGVLVGFHEKRSSFIADMASCEVLAPGVSALIQPLRELIGRLSNADRIPQIEVAAGEHVIVLVFRLLEPWNDDDAAHVRAFADAHHVQVWEQRKGPETARPFWPDIAPELSYGLPEFGLVMPFRPTEFTQVNSAINRALVSRALRLLDPRPGERIADLFCGLGNFTLPIAHRGADVLGIEGSTELVARARENALRNALPHARFEVDNLFEMTPEKFAALGPFDKLLIDPPRSGAIEVVKSLPEAGAPRRIVYVSCDPATLARDAEVLVHVKGYRLEAAGVANMFPHTAHVESIALFER.

The TRAM domain maps to 1 to 54 (MNPVVDILSLDHEGHGVARLDGKVTFVDGALAGERAEIAIFRKHAKYNSANAVA). Positions 67, 73, 76, and 155 each coordinate [4Fe-4S] cluster. The S-adenosyl-L-methionine site is built by Gln-264, Phe-293, Asn-298, Glu-314, Asn-341, and Asp-362. The Nucleophile role is filled by Cys-389.

The protein belongs to the class I-like SAM-binding methyltransferase superfamily. RNA M5U methyltransferase family. RlmD subfamily.

The catalysed reaction is uridine(1939) in 23S rRNA + S-adenosyl-L-methionine = 5-methyluridine(1939) in 23S rRNA + S-adenosyl-L-homocysteine + H(+). In terms of biological role, catalyzes the formation of 5-methyl-uridine at position 1939 (m5U1939) in 23S rRNA. This chain is 23S rRNA (uracil(1939)-C(5))-methyltransferase RlmD, found in Thiobacillus denitrificans (strain ATCC 25259 / T1).